The sequence spans 235 residues: 1-(5-phosphoribosyl)-5-[(5-phosphoribosylamino)methylideneamino] imidazole-4-carboxamide isomerase (235 aa).

The active-site Proton acceptor is the D8. The active-site Proton donor is the D127.

Belongs to the HisA/HisF family.

The protein localises to the cytoplasm. The catalysed reaction is 1-(5-phospho-beta-D-ribosyl)-5-[(5-phospho-beta-D-ribosylamino)methylideneamino]imidazole-4-carboxamide = 5-[(5-phospho-1-deoxy-D-ribulos-1-ylimino)methylamino]-1-(5-phospho-beta-D-ribosyl)imidazole-4-carboxamide. It participates in amino-acid biosynthesis; L-histidine biosynthesis; L-histidine from 5-phospho-alpha-D-ribose 1-diphosphate: step 4/9. The sequence is that of 1-(5-phosphoribosyl)-5-[(5-phosphoribosylamino)methylideneamino] imidazole-4-carboxamide isomerase from Nautilia profundicola (strain ATCC BAA-1463 / DSM 18972 / AmH).